A 111-amino-acid chain; its full sequence is Large ribosomal subunit protein uL22 (111 aa).

The protein belongs to the universal ribosomal protein uL22 family. Part of the 50S ribosomal subunit.

This protein binds specifically to 23S rRNA; its binding is stimulated by other ribosomal proteins, e.g. L4, L17, and L20. It is important during the early stages of 50S assembly. It makes multiple contacts with different domains of the 23S rRNA in the assembled 50S subunit and ribosome. Functionally, the globular domain of the protein is located near the polypeptide exit tunnel on the outside of the subunit, while an extended beta-hairpin is found that lines the wall of the exit tunnel in the center of the 70S ribosome. In Chlamydia felis (strain Fe/C-56) (Chlamydophila felis), this protein is Large ribosomal subunit protein uL22.